We begin with the raw amino-acid sequence, 1328 residues long: ATP-dependent DNA helicase hus2/rqh1 (1328 aa).

2 stretches are compositionally biased toward low complexity: residues 217 to 236 and 244 to 254; these read NNLPFPRLNNNNTNNNNDNN and ASPTPSSVSSQ. The segment at 217-254 is disordered; sequence NNLPFPRLNNNNTNNNNDNNAIEKRDSASPTPSSVSSQ. Residues 528–707 enclose the Helicase ATP-binding domain; it reads INGTLSGKDV…INTLRMENCL (180 aa). 555-562 provides a ligand contact to ATP; it reads AVIEGGAS. Positions 651–654 match the DEAH box motif; it reads DEAH. One can recognise a Helicase C-terminal domain in the interval 728-876; it reads LYTELYRFIS…ETKERQRQML (149 aa). The HRDC domain maps to 1115–1195; sequence IDVMTRCLKD…QKFIDEKEQN (81 aa). Disordered stretches follow at residues 1224-1247 and 1260-1328; these read EQGFSDDSDSVYEPSSPIEEGDEE and NSQS…QNYR. Residues 1260 to 1269 show a composition bias toward polar residues; that stretch reads NSQSLTQTGS. The span at 1283–1300 shows a compositional bias: basic residues; the sequence is KSYRHKRGSTSYSRKRKY.

The protein belongs to the helicase family. RecQ subfamily. In terms of assembly, interacts with top3.

The protein resides in the nucleus. The enzyme catalyses Couples ATP hydrolysis with the unwinding of duplex DNA by translocating in the 3'-5' direction.. It catalyses the reaction ATP + H2O = ADP + phosphate + H(+). In terms of biological role, ATP-dependent 3'-5' DNA-helicase. Has a role in the repair of UV-induced DNA damage in G2 via recombination-mediated repair. Also has a role in the repair of infrared-induced double DNA strand breaks. In Schizosaccharomyces pombe (strain 972 / ATCC 24843) (Fission yeast), this protein is ATP-dependent DNA helicase hus2/rqh1.